A 105-amino-acid chain; its full sequence is UPF0145 protein AHA_2580 (105 aa).

Belongs to the UPF0145 family.

The protein is UPF0145 protein AHA_2580 of Aeromonas hydrophila subsp. hydrophila (strain ATCC 7966 / DSM 30187 / BCRC 13018 / CCUG 14551 / JCM 1027 / KCTC 2358 / NCIMB 9240 / NCTC 8049).